The primary structure comprises 274 residues: 2,3,4,5-tetrahydropyridine-2,6-dicarboxylate N-succinyltransferase (274 aa).

Arg-106 and Asp-143 together coordinate substrate.

The protein belongs to the transferase hexapeptide repeat family. Homotrimer.

Its subcellular location is the cytoplasm. The catalysed reaction is (S)-2,3,4,5-tetrahydrodipicolinate + succinyl-CoA + H2O = (S)-2-succinylamino-6-oxoheptanedioate + CoA. It participates in amino-acid biosynthesis; L-lysine biosynthesis via DAP pathway; LL-2,6-diaminopimelate from (S)-tetrahydrodipicolinate (succinylase route): step 1/3. In Rickettsia akari (strain Hartford), this protein is 2,3,4,5-tetrahydropyridine-2,6-dicarboxylate N-succinyltransferase.